Reading from the N-terminus, the 616-residue chain is 2-isopropylmalate synthase (616 aa).

The tract at residues 1–34 (MSPNDAFISAPAKIETPVGPRNEGQPAWNKQRGS) is disordered. The Pyruvate carboxyltransferase domain occupies 67-341 (PQWCAVDLRD…DPQLDFTDIR (275 aa)). Asp76, His280, His282, and Asn316 together coordinate Mg(2+). A regulatory domain region spans residues 490–616 (RTAPVEQIAL…NHEAVLAGGV (127 aa)).

It belongs to the alpha-IPM synthase/homocitrate synthase family. LeuA type 2 subfamily. Homodimer. Mg(2+) serves as cofactor.

It localises to the cytoplasm. The catalysed reaction is 3-methyl-2-oxobutanoate + acetyl-CoA + H2O = (2S)-2-isopropylmalate + CoA + H(+). Its pathway is amino-acid biosynthesis; L-leucine biosynthesis; L-leucine from 3-methyl-2-oxobutanoate: step 1/4. Functionally, catalyzes the condensation of the acetyl group of acetyl-CoA with 3-methyl-2-oxobutanoate (2-ketoisovalerate) to form 3-carboxy-3-hydroxy-4-methylpentanoate (2-isopropylmalate). The sequence is that of 2-isopropylmalate synthase from Corynebacterium glutamicum (strain R).